Here is a 153-residue protein sequence, read N- to C-terminus: Large ribosomal subunit protein uL30 (153 aa).

Belongs to the universal ribosomal protein uL30 family. As to quaternary structure, part of the 50S ribosomal subunit.

The protein is Large ribosomal subunit protein uL30 of Methanocella arvoryzae (strain DSM 22066 / NBRC 105507 / MRE50).